We begin with the raw amino-acid sequence, 375 residues long: MILATTSSTFASLEEMVTVLSIDGGGIKGIIPGTILEFLEGQLQKMDNNADARLADYFDVIGGTSTGGLLTAMITTPNENNRPFAAANEIVPFYFEHGPHIFNSSTGQFFGPKYDGKYLMQVLQEKLGETRVHQALTEVAISSFDIKTNKPVIFTKSNLAKSPELDAKMYDICYSTAAAPTYFPPHYFATNTINGDKYKFNLVDGAVATVADPALLSVSVATRRAQEDPAFASIRSLNYKKMLLLSLGTGTTSEFDKTHTAEETAKWGALQWMLVIQQMTEAASSYMTDYYLSTVFQDLHSQNNYLRVQENALTGTTTKADDASEANMELLAQVGENLLKKPVSKDNPETYEEALKRFAKLLSDRKKLRANKASY.

Residues 1–11 form the signal peptide; sequence MILATTSSTFA. The region spanning 20 to 218 is the PNPLA domain; sequence LSIDGGGIKG…TVADPALLSV (199 aa). The GXGXXG motif lies at 24 to 29; sequence GGGIKG. Residues 63 to 67 carry the GXSXG motif; that stretch reads GTSTG. Ser65 (nucleophile) is an active-site residue. Asn103 carries an N-linked (GlcNAc...) asparagine glycan. The active-site Proton acceptor is Asp204. The DGA/G signature appears at 204-206; sequence DGA. Residues 349–373 are a coiled coil; it reads ETYEEALKRFAKLLSDRKKLRANKA.

It belongs to the patatin family. Tuber.

It localises to the vacuole. Its function is as follows. Probable lipolytic acyl hydrolase (LAH), an activity which is thought to be involved in the response of tubers to pathogens. This is Patatin-1-Kuras 2 (pat1-k2) from Solanum tuberosum (Potato).